We begin with the raw amino-acid sequence, 138 residues long: Eukaryotic translation initiation factor 1A (138 aa).

Over residues 1 to 15 (MPKNKGKGGKNRRRG) the composition is skewed to basic residues. Residues 1-28 (MPKNKGKGGKNRRRGKNENENEKRELTY) form a disordered region. Residues 16 to 27 (KNENENEKRELT) show a composition bias toward basic and acidic residues. The S1-like domain maps to 22–96 (EKRELTYAEE…EKGDVILKYT (75 aa)).

It belongs to the eIF-1A family.

Its function is as follows. Seems to be required for maximal rate of protein biosynthesis. Enhances ribosome dissociation into subunits and stabilizes the binding of the initiator Met-tRNA(I) to 40 S ribosomal subunits. This chain is Eukaryotic translation initiation factor 1A (tif11), found in Schizosaccharomyces pombe (strain 972 / ATCC 24843) (Fission yeast).